A 535-amino-acid chain; its full sequence is GMP synthase [glutamine-hydrolyzing] (535 aa).

In terms of domain architecture, Glutamine amidotransferase type-1 spans 24 to 217 (KILIVDFGSQ…VRKVAGLKGD (194 aa)). The active-site Nucleophile is cysteine 101. Residues histidine 191 and glutamate 193 contribute to the active site. Residues 218 to 410 (WTMRAFREEA…LGLPEVFVGR (193 aa)) enclose the GMPS ATP-PPase domain. 245-251 (SGGVDSA) contributes to the ATP binding site.

In terms of assembly, homodimer.

It catalyses the reaction XMP + L-glutamine + ATP + H2O = GMP + L-glutamate + AMP + diphosphate + 2 H(+). Its pathway is purine metabolism; GMP biosynthesis; GMP from XMP (L-Gln route): step 1/1. Catalyzes the synthesis of GMP from XMP. The protein is GMP synthase [glutamine-hydrolyzing] of Rhodopseudomonas palustris (strain BisB18).